We begin with the raw amino-acid sequence, 240 residues long: Uridylate kinase (240 aa).

15-18 provides a ligand contact to ATP; sequence KLSG. Residues 23-28 form an involved in allosteric activation by GTP region; it reads GSEGFG. Glycine 57 is a UMP binding site. Residues glycine 58 and arginine 62 each contribute to the ATP site. UMP is bound by residues aspartate 77 and 138–145; that span reads TGNPFFTT. Positions 165, 171, and 174 each coordinate ATP.

It belongs to the UMP kinase family. Homohexamer.

The protein localises to the cytoplasm. The enzyme catalyses UMP + ATP = UDP + ADP. Its pathway is pyrimidine metabolism; CTP biosynthesis via de novo pathway; UDP from UMP (UMPK route): step 1/1. With respect to regulation, allosterically activated by GTP. Inhibited by UTP. Functionally, catalyzes the reversible phosphorylation of UMP to UDP. The protein is Uridylate kinase of Photobacterium profundum (strain SS9).